The sequence spans 479 residues: Aspartyl/glutamyl-tRNA(Asn/Gln) amidotransferase subunit B (479 aa).

The protein belongs to the GatB/GatE family. GatB subfamily. Heterotrimer of A, B and C subunits.

It carries out the reaction L-glutamyl-tRNA(Gln) + L-glutamine + ATP + H2O = L-glutaminyl-tRNA(Gln) + L-glutamate + ADP + phosphate + H(+). The enzyme catalyses L-aspartyl-tRNA(Asn) + L-glutamine + ATP + H2O = L-asparaginyl-tRNA(Asn) + L-glutamate + ADP + phosphate + 2 H(+). Allows the formation of correctly charged Asn-tRNA(Asn) or Gln-tRNA(Gln) through the transamidation of misacylated Asp-tRNA(Asn) or Glu-tRNA(Gln) in organisms which lack either or both of asparaginyl-tRNA or glutaminyl-tRNA synthetases. The reaction takes place in the presence of glutamine and ATP through an activated phospho-Asp-tRNA(Asn) or phospho-Glu-tRNA(Gln). In Myxococcus xanthus (strain DK1622), this protein is Aspartyl/glutamyl-tRNA(Asn/Gln) amidotransferase subunit B.